The sequence spans 494 residues: Glutamate decarboxylase 2 (494 aa).

At lysine 276 the chain carries N6-(pyridoxal phosphate)lysine. The interval 463–494 (VKEKKMEKEILMEVIVGWRKFVKERKKMNGVC) is calmodulin-binding.

This sequence belongs to the group II decarboxylase family. In terms of assembly, homohexamer. Interacts with calmodulin. Pyridoxal 5'-phosphate is required as a cofactor. Expressed in roots, inflorescence stems, flowers, siliques and leaves.

The enzyme catalyses L-glutamate + H(+) = 4-aminobutanoate + CO2. Up-regulated by calmodulin binding at physiological pH. Functionally, catalyzes the conversion of glutamate to 4-aminobutanoate (GABA). The calmodulin-binding is calcium-dependent and it is proposed to directly or indirectly form a calcium regulated control of GABA biosynthesis. The sequence is that of Glutamate decarboxylase 2 (GAD2) from Arabidopsis thaliana (Mouse-ear cress).